The primary structure comprises 153 residues: Prostaglandin E synthase (153 aa).

The Lumenal segment spans residues 1–13 (MPPPSLAMVSGQA). The chain crosses the membrane as a helical span at residues 14–42 (LPAFLLCSTLLVIKMYAVAVITGQVRLRK). Arg-39 lines the glutathione pocket. The Cytoplasmic portion of the chain corresponds to 43 to 61 (KAFANPEDALRHGGLQFHR). Residues 62 to 91 (DDQDVERCLRAHRNDMETIYPFLFLGLVYS) traverse the membrane as a helical segment. 74 to 78 (RNDME) is a binding site for glutathione. The Lumenal segment spans residues 92–96 (FLGPD). Residues 97–120 (PFVAQMHFLVFFLGRMVHTVAYLG) traverse the membrane as a helical segment. His-114 and Tyr-118 together coordinate glutathione. The Cytoplasmic portion of the chain corresponds to 121–124 (KLRA). Residues 125–153 (PTRSLAYTVAQLPCASMALQIVWEAARHL) form a helical membrane-spanning segment. A glutathione-binding site is contributed by 127–131 (RSLAY).

It belongs to the MAPEG family. Homotrimer. Glutathione is required as a cofactor.

Its subcellular location is the membrane. It is found in the cytoplasm. It localises to the perinuclear region. The enzyme catalyses prostaglandin H2 = prostaglandin E2. It carries out the reaction 2-glyceryl-prostaglandin H2 = 2-glyceryl-prostaglandin E2. It catalyses the reaction prostaglandin G2 = (15S)-15-hydroperoxy-prostaglandin E2. The catalysed reaction is 1-chloro-2,4-dinitrobenzene + glutathione = 2,4-dinitrophenyl-S-glutathione + chloride + H(+). The enzyme catalyses (5S)-hydroperoxy-(6E,8Z,11Z,14Z)-eicosatetraenoate + 2 glutathione = (5S)-hydroxy-(6E,8Z,11Z,14Z)-eicosatetraenoate + glutathione disulfide + H2O. It functions in the pathway lipid metabolism; prostaglandin biosynthesis. Its function is as follows. Terminal enzyme of the cyclooxygenase (COX)-2-mediated prostaglandin E2 (PGE2) biosynthetic pathway. Catalyzes the glutathione-dependent oxidoreduction of prostaglandin endoperoxide H2 (PGH2) to prostaglandin E2 (PGE2) in response to inflammatory stimuli. Plays a key role in inflammation response, fever and pain. Also catalyzes the oxidoreduction of endocannabinoids into prostaglandin glycerol esters and PGG2 into 15-hydroperoxy-PGE2. In addition, displays low glutathione transferase and glutathione-dependent peroxidase activities, toward 1-chloro-2,4-dinitrobenzene and 5-hydroperoxyicosatetraenoic acid (5-HPETE), respectively. This chain is Prostaglandin E synthase (PTGES), found in Equus caballus (Horse).